We begin with the raw amino-acid sequence, 166 residues long: SsrA-binding protein (166 aa).

It belongs to the SmpB family.

Its subcellular location is the cytoplasm. Its function is as follows. Required for rescue of stalled ribosomes mediated by trans-translation. Binds to transfer-messenger RNA (tmRNA), required for stable association of tmRNA with ribosomes. tmRNA and SmpB together mimic tRNA shape, replacing the anticodon stem-loop with SmpB. tmRNA is encoded by the ssrA gene; the 2 termini fold to resemble tRNA(Ala) and it encodes a 'tag peptide', a short internal open reading frame. During trans-translation Ala-aminoacylated tmRNA acts like a tRNA, entering the A-site of stalled ribosomes, displacing the stalled mRNA. The ribosome then switches to translate the ORF on the tmRNA; the nascent peptide is terminated with the 'tag peptide' encoded by the tmRNA and targeted for degradation. The ribosome is freed to recommence translation, which seems to be the essential function of trans-translation. The sequence is that of SsrA-binding protein from Parasynechococcus marenigrum (strain WH8102).